The primary structure comprises 396 residues: Probable splicing factor YJU2B (396 aa).

The segment at Met-1–Tyr-26 is disordered. Ser-40 carries the post-translational modification Phosphoserine. Positions Leu-182–Thr-214 form a coiled coil. A disordered region spans residues Ile-295–Glu-396. At Ser-306 the chain carries Phosphoserine. Residues Lys-315–Gln-327 are compositionally biased toward basic and acidic residues. Positions Thr-340–Arg-350 are enriched in polar residues. Residue Ser-362 is modified to Phosphoserine.

It belongs to the CWC16 family.

It localises to the nucleus. Its function is as follows. May be involved in mRNA splicing. The polypeptide is Probable splicing factor YJU2B (Homo sapiens (Human)).